The sequence spans 330 residues: MKHFWKILSVISQSTLSVILIVELVIGIIGNGFMVLVHCMDWVKKKKMSLVNQILTALSISRIFQLCLLFISLVINFSYTDLTTSSRMIQVMYNAWILANHFSIWIATCLTVLYFLKIANFSNSFFLYLKWRVEKVVSVTLLVSLLLLILNILLTNLETDMWTNEYQRNISCSFSSHYYAKCHRQVLRLHIIFLSVPVVLSLSTFLLLIFSLWTHHKRMQQHVQGGRDARTTAHFKALQTVIAFFLLYSIFILSVLIQIWKYELLKKNLFVVFCEVVYIAFPTFHSYILIVGDMKLRQACLPLCIIAAEIQTTLCRNFRSLKYFRLCCIF.

Over 1 to 16 (MKHFWKILSVISQSTL) the chain is Extracellular. The chain crosses the membrane as a helical span at residues 17–37 (SVILIVELVIGIIGNGFMVLV). Over 38 to 53 (HCMDWVKKKKMSLVNQ) the chain is Cytoplasmic. A helical transmembrane segment spans residues 54–74 (ILTALSISRIFQLCLLFISLV). The Extracellular portion of the chain corresponds to 75 to 95 (INFSYTDLTTSSRMIQVMYNA). Residue Asn76 is glycosylated (N-linked (GlcNAc...) asparagine). The helical transmembrane segment at 96-116 (WILANHFSIWIATCLTVLYFL) threads the bilayer. At 117 to 135 (KIANFSNSFFLYLKWRVEK) the chain is on the cytoplasmic side. Residues 136–156 (VVSVTLLVSLLLLILNILLTN) form a helical membrane-spanning segment. The Extracellular segment spans residues 157–190 (LETDMWTNEYQRNISCSFSSHYYAKCHRQVLRLH). Asn169 carries an N-linked (GlcNAc...) asparagine glycan. Residues 191–211 (IIFLSVPVVLSLSTFLLLIFS) traverse the membrane as a helical segment. At 212–239 (LWTHHKRMQQHVQGGRDARTTAHFKALQ) the chain is on the cytoplasmic side. The helical transmembrane segment at 240–260 (TVIAFFLLYSIFILSVLIQIW) threads the bilayer. Residues 261 to 269 (KYELLKKNL) lie on the Extracellular side of the membrane. A helical membrane pass occupies residues 270–290 (FVVFCEVVYIAFPTFHSYILI). Over 291-330 (VGDMKLRQACLPLCIIAAEIQTTLCRNFRSLKYFRLCCIF) the chain is Cytoplasmic.

The protein belongs to the G-protein coupled receptor T2R family.

It localises to the membrane. Its function is as follows. Putative taste receptor which may play a role in the perception of bitterness. This chain is Taste receptor type 2 member 117, found in Mus musculus (Mouse).